Here is a 201-residue protein sequence, read N- to C-terminus: uncharacterized protein (201 aa).

The 108-residue stretch at 15–122 folds into the Bro-N domain; it reads KNQIQFSTFN…EVLPQIRKTG (108 aa).

This is an uncharacterized protein from Haemophilus influenzae (strain ATCC 51907 / DSM 11121 / KW20 / Rd).